The following is an 856-amino-acid chain: Alginate lyase 7 (856 aa).

8 PbH1 repeats span residues 133 to 155 (DYNV…DPHE), 157 to 179 (TINL…VADF), 180 to 202 (QIGA…NIVT), 204 to 226 (SHDI…VVQR), 234 to 256 (VYNV…LIKM), 257 to 279 (STDV…RVQG), 280 to 304 (VEDV…EVIV), and 320 to 342 (TQNV…GIQE). Hemolysin-type calcium-binding repeat units lie at residues 387 to 402 (GSTG…IADL), 404 to 421 (VGGS…NDVL), 422 to 439 (EGGA…ADIF), 538 to 549 (GTEGDDSLTGNA), 554 to 563 (LDGGSGNDSL), 565 to 581 (GGLG…DDIL), 582 to 599 (NGGL…ADIF), 715 to 731 (GGAG…DDIL), and 733 to 749 (GGSE…ADVF).

Belongs to the D-mannuronate C5-epimerase family. The cofactor is Ca(2+).

Its subcellular location is the secreted. The enzyme catalyses Eliminative cleavage of alginate to give oligosaccharides with 4-deoxy-alpha-L-erythro-hex-4-enuronosyl groups at their non-reducing ends and beta-D-mannuronate at their reducing end.. The catalysed reaction is [(1-&gt;4)-beta-D-mannuronosyl](n) = [alginate](n). It functions in the pathway glycan biosynthesis; alginate biosynthesis. Inhibited by zinc. Functionally, converts beta-D-mannuronic acid (M) to alpha-L-guluronic acid (G). Has both epimerase and lyase activities. Contributes to abortive encystment by degrading the coat from inside the cyst. Important for cyst germination. In Azotobacter vinelandii, this protein is Alginate lyase 7.